The following is a 188-amino-acid chain: Peptidyl-tRNA hydrolase (188 aa).

Tyr15 provides a ligand contact to tRNA. The active-site Proton acceptor is His20. Phe66, Asn68, and Asn114 together coordinate tRNA.

It belongs to the PTH family. In terms of assembly, monomer.

The protein resides in the cytoplasm. The enzyme catalyses an N-acyl-L-alpha-aminoacyl-tRNA + H2O = an N-acyl-L-amino acid + a tRNA + H(+). Hydrolyzes ribosome-free peptidyl-tRNAs (with 1 or more amino acids incorporated), which drop off the ribosome during protein synthesis, or as a result of ribosome stalling. In terms of biological role, catalyzes the release of premature peptidyl moieties from peptidyl-tRNA molecules trapped in stalled 50S ribosomal subunits, and thus maintains levels of free tRNAs and 50S ribosomes. The chain is Peptidyl-tRNA hydrolase from Lactococcus lactis subsp. lactis (strain IL1403) (Streptococcus lactis).